Consider the following 291-residue polypeptide: Protein pxr1 (291 aa).

Basic residues predominate over residues 1–11 (MGLAAPRKRTK). Disordered regions lie at residues 1-26 (MGLA…RSTD) and 146-268 (LVPP…FRGR). 2 stretches are compositionally biased toward polar residues: residues 15-25 (DPNNTTWSRST) and 146-156 (LVPPTSQNGQA). A G-patch domain is found at 25–79 (TDGFGHRILKAQGWTPGSFLGPRNAAHSDLFTTASASHIRVVLKDDNLGLGARPK). The span at 194–205 (ETNSRGSREKER) shows a compositional bias: basic and acidic residues. The span at 206-219 (KREKRQMRRDKKRK) shows a compositional bias: basic residues. The span at 230 to 247 (MQEKTRVQGPSEDVKPTE) shows a compositional bias: basic and acidic residues.

The protein belongs to the PINX1 family.

Its subcellular location is the nucleus. It localises to the nucleolus. Its function is as follows. Involved in rRNA-processing at A0, A1 and A2 sites and negatively regulates telomerase. This chain is Protein pxr1 (pxr1), found in Aspergillus clavatus (strain ATCC 1007 / CBS 513.65 / DSM 816 / NCTC 3887 / NRRL 1 / QM 1276 / 107).